The primary structure comprises 158 residues: 2-C-methyl-D-erythritol 2,4-cyclodiphosphate synthase (158 aa).

A divalent metal cation is bound by residues Asp9 and His11. 4-CDP-2-C-methyl-D-erythritol 2-phosphate-binding positions include 9 to 11 (DVH) and 35 to 36 (HS). A divalent metal cation is bound at residue His43. 4-CDP-2-C-methyl-D-erythritol 2-phosphate contacts are provided by residues 57-59 (DIG), 62-66 (FPDTD), 101-107 (AQAPKMA), 133-136 (TTTE), Phe140, and Arg143.

It belongs to the IspF family. In terms of assembly, homotrimer. A divalent metal cation serves as cofactor.

It catalyses the reaction 4-CDP-2-C-methyl-D-erythritol 2-phosphate = 2-C-methyl-D-erythritol 2,4-cyclic diphosphate + CMP. It functions in the pathway isoprenoid biosynthesis; isopentenyl diphosphate biosynthesis via DXP pathway; isopentenyl diphosphate from 1-deoxy-D-xylulose 5-phosphate: step 4/6. In terms of biological role, involved in the biosynthesis of isopentenyl diphosphate (IPP) and dimethylallyl diphosphate (DMAPP), two major building blocks of isoprenoid compounds. Catalyzes the conversion of 4-diphosphocytidyl-2-C-methyl-D-erythritol 2-phosphate (CDP-ME2P) to 2-C-methyl-D-erythritol 2,4-cyclodiphosphate (ME-CPP) with a corresponding release of cytidine 5-monophosphate (CMP). This Vibrio campbellii (strain ATCC BAA-1116) protein is 2-C-methyl-D-erythritol 2,4-cyclodiphosphate synthase.